Consider the following 882-residue polypeptide: Molybdenum cofactor sulfurase (882 aa).

Lys265 carries the post-translational modification N6-(pyridoxal phosphate)lysine. Cys425 is a catalytic residue. A disordered region spans residues 496 to 546 (GQPLPLATPGEAGAPPEDSEAQNAVPAARARGSSSPQEDTSPHSGVWNNSP). Residues 527-546 (GSSSPQEDTSPHSGVWNNSP) show a composition bias toward polar residues. Phosphoserine occurs at positions 528 and 530. Positions 707 to 868 (KQSSDFQRNA…LSVGSQVLPL (162 aa)) constitute an MOSC domain.

Belongs to the class-V pyridoxal-phosphate-dependent aminotransferase family. MOCOS subfamily. Pyridoxal 5'-phosphate serves as cofactor. Ubiquitously expressed.

It carries out the reaction Mo-molybdopterin + L-cysteine + AH2 = thio-Mo-molybdopterin + L-alanine + A + H2O. It participates in cofactor biosynthesis; molybdopterin biosynthesis. Sulfurates the molybdenum cofactor. Sulfation of molybdenum is essential for xanthine dehydrogenase (XDH) and aldehyde oxidase (ADO) enzymes in which molybdenum cofactor is liganded by 1 oxygen and 1 sulfur atom in active form. This is Molybdenum cofactor sulfurase from Bos taurus (Bovine).